The sequence spans 186 residues: Crossover junction endodeoxyribonuclease RuvC (186 aa).

Active-site residues include D7, E73, and D145. Residues D7, E73, and D145 each contribute to the Mg(2+) site.

It belongs to the RuvC family. Homodimer which binds Holliday junction (HJ) DNA. The HJ becomes 2-fold symmetrical on binding to RuvC with unstacked arms; it has a different conformation from HJ DNA in complex with RuvA. In the full resolvosome a probable DNA-RuvA(4)-RuvB(12)-RuvC(2) complex forms which resolves the HJ. The cofactor is Mg(2+).

The protein resides in the cytoplasm. The catalysed reaction is Endonucleolytic cleavage at a junction such as a reciprocal single-stranded crossover between two homologous DNA duplexes (Holliday junction).. The RuvA-RuvB-RuvC complex processes Holliday junction (HJ) DNA during genetic recombination and DNA repair. Endonuclease that resolves HJ intermediates. Cleaves cruciform DNA by making single-stranded nicks across the HJ at symmetrical positions within the homologous arms, yielding a 5'-phosphate and a 3'-hydroxyl group; requires a central core of homology in the junction. The consensus cleavage sequence is 5'-(A/T)TT(C/G)-3'. Cleavage occurs on the 3'-side of the TT dinucleotide at the point of strand exchange. HJ branch migration catalyzed by RuvA-RuvB allows RuvC to scan DNA until it finds its consensus sequence, where it cleaves and resolves the cruciform DNA. This Acidovorax sp. (strain JS42) protein is Crossover junction endodeoxyribonuclease RuvC.